The primary structure comprises 1801 residues: U3 small nucleolar RNA-associated protein 10 (1801 aa).

An HEAT 1 repeat occupies 582–619 (IDFQALVPFVLVALGDVSERIRREAAAVLAALGALYKK). The next 2 membrane-spanning stretches (helical) occupy residues 945 to 965 (IQSG…AIVN) and 1001 to 1021 (ALLL…HSVM). HEAT repeat units follow at residues 1045-1082 (QTID…AFEH), 1252-1289 (LSLI…QNPE), 1296-1334 (NRML…KYGK), and 1757-1794 (ALLP…VLGE).

Belongs to the HEATR1/UTP10 family. In terms of assembly, component of the ribosomal small subunit (SSU) processome.

It is found in the nucleus. It localises to the nucleolus. Its subcellular location is the membrane. Its function is as follows. Involved in nucleolar processing of pre-18S ribosomal RNA. Involved in ribosome biosynthesis. In Aspergillus terreus (strain NIH 2624 / FGSC A1156), this protein is U3 small nucleolar RNA-associated protein 10.